A 2431-amino-acid polypeptide reads, in one-letter code: Histone-lysine N-methyltransferase trr (2431 aa).

4 disordered regions span residues 34 to 78 (LQKR…STAP), 135 to 201 (DADK…ENSG), 213 to 235 (ASGADSSTSVGNSTGTGTPAGTP), and 759 to 789 (QSANQIQMATSTSTASNPSTPNPTVNATPMN). Residues 142–165 (YRISTPRNSQSNPLLHRNTAFTSF) are compositionally biased toward polar residues. Composition is skewed to low complexity over residues 171–183 (ASSSASSSSSTAS), 218–235 (SSTSVGNSTGTGTPAGTP), and 767–787 (ATSTSTASNPSTPNPTVNATP). The LXXLL motif 1 motif lies at 801–805 (LKQLL). Disordered stretches follow at residues 863–895 (PVPTATQAAGSSSSSGSVATSTTTTTVASGGSS), 918–973 (VGGE…QVKQ), 1226–1292 (HPQQ…AGGA), 1404–1433 (TSGGGSPASMSSAASAGSSSAGGGKLKGGS), and 1478–1500 (GLVGGSARTRSPSPAESPGAEKM). 3 stretches are compositionally biased toward low complexity: residues 866-895 (TATQAAGSSSSSGSVATSTTTTTVASGGSS), 952-970 (QQQQQQLHQPQQLQPSPHQ), and 1226-1241 (HPQQQQQQLHQNQPQN). Positions 1269-1281 (RKRRKREVQKPRR) are enriched in basic residues. Residues 1410–1422 (PASMSSAASAGSS) show a composition bias toward low complexity. Residues 1423–1433 (SAGGGKLKGGS) show a composition bias toward gly residues. At T1486 the chain carries Phosphothreonine. Phosphoserine occurs at positions 1488 and 1490. The LXXLL motif 2 motif lies at 1652-1656 (LANLL). The interval 1790-1836 (GGSAVKSSNGDSPGSFCASSTAPAEMVVKQEPEDEDEKTPSVPGNPT) is disordered. Residues 1794-1811 (VKSSNGDSPGSFCASSTA) are compositionally biased toward polar residues. The C2HC pre-PHD-type zinc-finger motif lies at 1895-1935 (TRQCVFCNQRGDGQADGPSRLLNFDVDKWVHLNCALWSNGV). The PHD-type zinc finger occupies 1956-2003 (QACSACHQPGATIKCFKSRCNSLYHLPCAIREECVFYKNKSVHCSVHG). The LXXLL motif 3 motif lies at 2060-2064 (LSNLL). In terms of domain architecture, FYR N-terminal spans 2061–2121 (SNLLRVGNMT…CRYICSIAEA (61 aa)). The 88-residue stretch at 2122–2209 (GCKPEFRIQV…ETLTDYRFKY (88 aa)) folds into the FYR C-terminal domain. The SET domain maps to 2291-2407 (NNVYLARSKI…RGEELSYDYK (117 aa)). The region spanning 2415–2431 (HKIPCACGAPNCRKWMN) is the Post-SET domain.

Belongs to the class V-like SAM-binding methyltransferase superfamily. Histone-lysine methyltransferase family. TRX/MLL subfamily. Component of the MLL3/4 complex composed at least of the catalytic subunit trr, ash2, Rbbp5, Dpy-30L1, wds, hcf, ptip, Pa1, Utx, Lpt and Ncoa6. Interacts with nuclear receptor EcR in an ecdysone-dependent manner. Interacts with ash2; the interaction stabilizes trr. Widely expressed.

It is found in the nucleus. Its subcellular location is the chromosome. It catalyses the reaction L-lysyl(4)-[histone H3] + 3 S-adenosyl-L-methionine = N(6),N(6),N(6)-trimethyl-L-lysyl(4)-[histone H3] + 3 S-adenosyl-L-homocysteine + 3 H(+). Functionally, histone methyltransferase that acts as a coactivator for the ecdysone receptor during development. Specifically trimethylates 'Lys-4' of histone H3, a specific tag for epigenetic transcriptional activation. Recruited by EcR in an ecdysone-dependent manner causing H3 'Lys-4' trimethylation at ecdysone-inducible promoters, leading to activate expression. Plays a central role in the developing compound eye, during the progression of the morphogenetic furrow and in post-furrow differentiation of the retinal epithelium, notably by activating expression of hh. Also required for wing and abdominal development. This is Histone-lysine N-methyltransferase trr (trr) from Drosophila melanogaster (Fruit fly).